The primary structure comprises 128 residues: Probable 4-amino-4-deoxy-L-arabinose-phosphoundecaprenol flippase subunit ArnF (128 aa).

At 1–2 (MG) the chain is on the cytoplasmic side. A helical transmembrane segment spans residues 3-23 (LMWGLFSVIIASVAQLSLGFA). Residues 24–35 (ASHLPPMTHLWD) are Periplasmic-facing. The helical transmembrane segment at 36–56 (FIAALLAFGLDARILLLGLLG) threads the bilayer. Residues 57–76 (YLLSVFCWYKTLHKLALSKA) lie on the Cytoplasmic side of the membrane. A helical membrane pass occupies residues 77–97 (YALLSMSYVLVWIASMVLPGW). Residues 98–100 (EGT) lie on the Periplasmic side of the membrane. Residues 101 to 121 (FSLKALLGVACIMSGLMLIFL) traverse the membrane as a helical segment. Over 122-128 (PMTKQRY) the chain is Cytoplasmic.

It belongs to the ArnF family. Heterodimer of ArnE and ArnF.

The protein localises to the cell inner membrane. It participates in bacterial outer membrane biogenesis; lipopolysaccharide biosynthesis. Its function is as follows. Translocates 4-amino-4-deoxy-L-arabinose-phosphoundecaprenol (alpha-L-Ara4N-phosphoundecaprenol) from the cytoplasmic to the periplasmic side of the inner membrane. The chain is Probable 4-amino-4-deoxy-L-arabinose-phosphoundecaprenol flippase subunit ArnF from Escherichia coli (strain 55989 / EAEC).